Here is a 139-residue protein sequence, read N- to C-terminus: Large-conductance mechanosensitive channel (139 aa).

3 helical membrane-spanning segments follow: residues 19–39, 40–60, and 81–101; these read VGVI…ADII, MPIV…LPLS, and GNFL…FMVI.

It belongs to the MscL family. Homopentamer.

The protein resides in the cell inner membrane. In terms of biological role, channel that opens in response to stretch forces in the membrane lipid bilayer. May participate in the regulation of osmotic pressure changes within the cell. In Nitrobacter winogradskyi (strain ATCC 25391 / DSM 10237 / CIP 104748 / NCIMB 11846 / Nb-255), this protein is Large-conductance mechanosensitive channel.